A 589-amino-acid chain; its full sequence is MDLEAVREKYRQERDKRGVGRTYQFARGDFSRYARDPYTERREREPLTDEVDVAVVGAGIGGLLTGARLREETGLERIRLIDEAGDVGGTWYWNRFPGVRCDVESYVYMPLLEEIGTIPTEKYSTGPEIFAHLQRIAHRYGLYRDALFQTTVTELRWDEAAARWLVSTDRGDLFRARYVAMSIGLMHRPKLPGLPGLETFAGHSFHTSRWDFGYTGGDSTGGLTGLKDKRVGVIGTGSTTVQLAPHLAEWAERLYIFQRTPAAVDVRGNRPTPPGWADGLDAGWQQRRMENFHALTSGIPQDEDLVQDRWTQTTAELATAILPTGDTGGDPKERALAAERADFRKMEELRARIDSVVTDPATAAALKPYYRVYCKRPCFHDGYLQTFNRPNVTLVDTQGQGVERLTASGVVANGREYPVDCLIFATGYEHEFAVPYTERAGYDIVGRGGVRLSEKWAQGAHTLHGLQVHGFPNCFILSKVQAGRHVNIAYMLGEQTRHLAHIVKCVEERGHRVVEASEAGEKEWVEEILRLASGDLDFLENCTPGLYNNEGDPGGLPLLNSSYGGGSVEFVNILRRWREAGDLAGLELR.

FAD-binding positions include 60-61 (IG), 82-83 (DE), 90-91 (TW), 102-103 (DV), Y108, V152, and M491.

Belongs to the FAD-binding monooxygenase family. Requires FAD as cofactor.

It carries out the reaction 1-deoxy-11-oxopentalenate + NADPH + O2 + H(+) = pentalenolactone D + NADP(+) + H2O. The protein operates within antibiotic biosynthesis; pentalenolactone biosynthesis. Its function is as follows. Catalyzes the flavin-dependent Baeyer-Villiger oxidation of 1-deoxy-11-oxopentalenic acid to pentalenolactone D in the biosynthesis of pentalenolactone antibiotic. This Streptomyces arenae protein is Pentalenolactone D synthase (pntE).